Consider the following 760-residue polypeptide: METHRKNSVVGNILHTCHPCRRTIPYRIYAIFHTCGIIALMYHHVHSLVTANNTLITCLLLLSDIVLAFMWATTTSLRLNPVHRTECPEKYAAKPEDFPKLDVFICTADPYKEPPMMVVNTALSVMAYEYPSDKISVYVSDDGGSSLTFFALIEAAKFSKQWLPFCKKNNVQDRSPEVYFSSESHSRSDEAENLKMMYEDMKSRVEHVVESGKVETAFITCDQFRGVFDLWTDKFSRHDHPTIIQVLQNSETDMDNTRKYIMPNLIYVSREKSKVSPHHFKAGALNTLLRVSGVMTNSPIILTLDCDMYSNDPATLVRALCYLTDPEIKSGLGYVQFPQKFLGISKNDIYACENKRLFIINMVGFDGLMGPTHVGTGCFFNRRAFYGPPYMLILPEINELKPYRIADKSIKAQDVLSLAHNVAGCIYEYNTNWGSKIGFRYGSLVEDYYTGFMLHCEGWRSVFCNPKKAAFYGDSPKCLVDLVGQQIRWAVGLFEMSFSKYSPITYGIKSLDLLMGLGYCNSPFKPFWSIPLTVYGLLPQLALISGVSVFPKASDPWFWLYIILFFGAYAQDLSDFLLEGGTYRKWWNDQRMLMIKGLSSFFFGFIEFILKTLNLSTPKFNVTSKANDDDEQRKRYEQEIFDFGTSSSMFLPLTTVAIVNLLAFVWGLYGILFCGGELYLELMLVSFAVVNCLPIYGAMVLRKDDGKLSKRTCFLAGNLHVGSYCVKLLRPQVTSPLRLIHNNNTSGWFKRKKHNMNESV.

2 consecutive transmembrane segments (helical) span residues 28-48 (IYAI…VHSL) and 54-74 (TLIT…WATT). Catalysis depends on residues Asp-142 and Asp-447. 5 helical membrane-spanning segments follow: residues 530–550 (IPLT…VSVF), 558–578 (FWLY…DFLL), 593–613 (LMIK…LKTL), 656–676 (VAIV…FCGG), and 680–700 (LELM…GAMV).

It belongs to the glycosyltransferase 2 family. Plant cellulose synthase-like G subfamily. As to expression, expressed in young seedlings, primarily in the vascular tissue.

The protein resides in the golgi apparatus membrane. In terms of biological role, thought to be a Golgi-localized beta-glycan synthase that polymerize the backbones of noncellulosic polysaccharides (hemicelluloses) of plant cell wall. The chain is Cellulose synthase-like protein G1 (CSLG1) from Arabidopsis thaliana (Mouse-ear cress).